The chain runs to 157 residues: Transcription elongation factor GreB (157 aa).

The protein belongs to the GreA/GreB family. GreB subfamily.

Necessary for efficient RNA polymerase transcription elongation past template-encoded arresting sites. The arresting sites in DNA have the property of trapping a certain fraction of elongating RNA polymerases that pass through, resulting in locked ternary complexes. Cleavage of the nascent transcript by cleavage factors such as GreA or GreB allows the resumption of elongation from the new 3'terminus. GreB releases sequences of up to 9 nucleotides in length. In Salmonella typhimurium (strain LT2 / SGSC1412 / ATCC 700720), this protein is Transcription elongation factor GreB.